Here is a 121-residue protein sequence, read N- to C-terminus: Immunoglobulin kappa variable 2-40 (121 aa).

An N-terminal signal peptide occupies residues 1–19; the sequence is MRLPAQLLGLLMLWVPGSS. One can recognise an Ig-like domain in the interval 20 to 121; that stretch reads EDIVMTQTPL…YYCMQRIEFP (102 aa). Residues 21–43 are framework-1; it reads DIVMTQTPLSLPVTPGEPASISC. Cys43 and Cys114 are oxidised to a cystine. A complementarity-determining-1 region spans residues 44–60; the sequence is RSSQSLLDSDDGNTYLD. The interval 61–75 is framework-2; it reads WYLQKPGQSPQLLIY. A complementarity-determining-2 region spans residues 76 to 82; it reads TLSYRAS. Residues 83–114 are framework-3; sequence GVPDRFSGSGSGTDFTLKISRVEAEDVGVYYC. The complementarity-determining-3 stretch occupies residues 115-121; it reads MQRIEFP.

In terms of assembly, immunoglobulins are composed of two identical heavy chains and two identical light chains; disulfide-linked.

It is found in the secreted. It localises to the cell membrane. In terms of biological role, v region of the variable domain of immunoglobulin light chains that participates in the antigen recognition. Immunoglobulins, also known as antibodies, are membrane-bound or secreted glycoproteins produced by B lymphocytes. In the recognition phase of humoral immunity, the membrane-bound immunoglobulins serve as receptors which, upon binding of a specific antigen, trigger the clonal expansion and differentiation of B lymphocytes into immunoglobulins-secreting plasma cells. Secreted immunoglobulins mediate the effector phase of humoral immunity, which results in the elimination of bound antigens. The antigen binding site is formed by the variable domain of one heavy chain, together with that of its associated light chain. Thus, each immunoglobulin has two antigen binding sites with remarkable affinity for a particular antigen. The variable domains are assembled by a process called V-(D)-J rearrangement and can then be subjected to somatic hypermutations which, after exposure to antigen and selection, allow affinity maturation for a particular antigen. This chain is Immunoglobulin kappa variable 2-40, found in Homo sapiens (Human).